A 49-amino-acid polypeptide reads, in one-letter code: MGKRKANHTISGMNVASAQGQGTGYNEEFANEPLTPAERQNNKKRKKNQ.

The disordered stretch occupies residues 1 to 49 (MGKRKANHTISGMNVASAQGQGTGYNEEFANEPLTPAERQNNKKRKKNQ). Positions 8–20 (HTISGMNVASAQG) are enriched in polar residues.

Belongs to the SspO family.

Its subcellular location is the spore core. The protein is Small, acid-soluble spore protein O of Bacillus cereus (strain G9842).